The following is a 519-amino-acid chain: Exodeoxyribonuclease 7 large subunit (519 aa).

This sequence belongs to the XseA family. In terms of assembly, heterooligomer composed of large and small subunits.

It is found in the cytoplasm. The enzyme catalyses Exonucleolytic cleavage in either 5'- to 3'- or 3'- to 5'-direction to yield nucleoside 5'-phosphates.. Functionally, bidirectionally degrades single-stranded DNA into large acid-insoluble oligonucleotides, which are then degraded further into small acid-soluble oligonucleotides. In Cereibacter sphaeroides (strain ATCC 17025 / ATH 2.4.3) (Rhodobacter sphaeroides), this protein is Exodeoxyribonuclease 7 large subunit.